The following is a 208-amino-acid chain: RDVNKPSVLLFIDNIFRFVQAGSEVSALLGRMPSAVGYQPTLGTEMGSLQERITSTKEGSITSIQAVYVPADDPTDPAPATTFAHLDATTVLPRGLAAKGIYPAVDPLDSTSTMLQPWIVGEEHHETAQGVKQTLQRYKELQDIIAILGLDESSEEDRLTVARARKIERFLSQPFFVAEVFTGSPGKYVSLPETIKGFQMILPGXLDN.

The protein belongs to the ATPase alpha/beta chains family. F-type ATPases have 2 components, CF(1) - the catalytic core - and CF(0) - the membrane proton channel. CF(1) has five subunits: alpha(3), beta(3), gamma(1), delta(1), epsilon(1). CF(0) has four main subunits: a(1), b(1), b'(1) and c(9-12).

Its subcellular location is the plastid. It localises to the chloroplast thylakoid membrane. The catalysed reaction is ATP + H2O + 4 H(+)(in) = ADP + phosphate + 5 H(+)(out). Its function is as follows. Produces ATP from ADP in the presence of a proton gradient across the membrane. The catalytic sites are hosted primarily by the beta subunits. The sequence is that of ATP synthase subunit beta, chloroplastic (atpB) from Lonchitis hirsuta (Tomato fern).